Reading from the N-terminus, the 1077-residue chain is Teashirt homolog 1 (1077 aa).

Disordered stretches follow at residues 1–109 (MPRR…VSYP), 139–195 (SGST…SSSS), and 269–298 (GHYRDDNRDKDSEKTKRWSKPRKRSLMEME). The segment covering 26–36 (IDEEHVEDDGL) has biased composition (acidic residues). Polar residues-rich tracts occupy residues 57–71 (QSYQNSPVSSATNQD) and 139–152 (SGSTTSTNDASQKE). A compositionally biased stretch (low complexity) spans 164 to 195 (PVSTTGPTTSTPSTSCSSSTSHSSTTSTSSSS). 2 C2H2-type zinc fingers span residues 246 to 270 (FRCKDCSAAYDTLVELTVHMNETGH) and 307 to 331 (LKCMYCGHSFESLQDLSVHMIKTKH). Basic and acidic residues predominate over residues 269–284 (GHYRDDNRDKDSEKTK). Residues 416–440 (LKCMECGSSHDTLQQLTAHMMVTGH) form a C2H2-type 3; atypical zinc finger. Disordered stretches follow at residues 467–549 (SIPL…KGGL) and 647–720 (TGKV…EPLK). Composition is skewed to basic and acidic residues over residues 496–528 (SEEKKEPEKEKPPVAGDAEKIKEESEDSLEKFE), 647–665 (TGKVNIKKEERPPEKEKSS), and 675–708 (KENKDFPKTEEVSGKPQKKGPEAETGKAKKEGPL). Position 765 is a phosphoserine (Ser765). A disordered region spans residues 848-873 (TGRLTPKSSTPSTVSEKSDADGSSFE). Polar residues predominate over residues 853–862 (PKSSTPSTVS). Positions 885–955 (RKGRQSNWNP…NVKYQLRRTG (71 aa)) form a DNA-binding region, homeobox; atypical. 2 C2H2-type zinc fingers span residues 970-992 (FFCNDCASQFRTASTYISHLETH) and 1037-1060 (FQCKLCNRTFASKHAVKLHLSKTH).

It belongs to the teashirt C2H2-type zinc-finger protein family. In terms of assembly, interacts (via homeobox domain) with APBB1 (via PID domain 1). In terms of tissue distribution, expressed in brain; strongly reduced in post-mortem elderly subjects with Alzheimer disease.

Its subcellular location is the nucleus. Probable transcriptional regulator involved in developmental processes. May act as a transcriptional repressor (Potential). The polypeptide is Teashirt homolog 1 (TSHZ1) (Homo sapiens (Human)).